The primary structure comprises 196 residues: Small ribosomal subunit protein uS4c (196 aa).

The span at 1–14 (MSRYRGPRLKKIRR) shows a compositional bias: basic residues. The disordered stretch occupies residues 1–43 (MSRYRGPRLKKIRRLGALPGLTRKTPKSGSNPKKKFHSGKKEQ). The S4 RNA-binding domain occupies 89 to 169 (MRLDNILFRL…LPKHLTIDTL (81 aa)).

This sequence belongs to the universal ribosomal protein uS4 family. As to quaternary structure, part of the 30S ribosomal subunit. Contacts protein S5. The interaction surface between S4 and S5 is involved in control of translational fidelity.

It is found in the plastid. Its subcellular location is the chloroplast. In terms of biological role, one of the primary rRNA binding proteins, it binds directly to 16S rRNA where it nucleates assembly of the body of the 30S subunit. Functionally, with S5 and S12 plays an important role in translational accuracy. The protein is Small ribosomal subunit protein uS4c (rps4) of Melica uniflora (Wood melick grass).